The following is a 103-amino-acid chain: Large ribosomal subunit protein uL24 (103 aa).

Belongs to the universal ribosomal protein uL24 family. Part of the 50S ribosomal subunit.

One of two assembly initiator proteins, it binds directly to the 5'-end of the 23S rRNA, where it nucleates assembly of the 50S subunit. Its function is as follows. One of the proteins that surrounds the polypeptide exit tunnel on the outside of the subunit. The chain is Large ribosomal subunit protein uL24 from Christiangramia forsetii (strain DSM 17595 / CGMCC 1.15422 / KT0803) (Gramella forsetii).